The sequence spans 359 residues: Peptide chain release factor 1 (359 aa).

Glutamine 235 carries the post-translational modification N5-methylglutamine.

Belongs to the prokaryotic/mitochondrial release factor family. Post-translationally, methylated by PrmC. Methylation increases the termination efficiency of RF1.

The protein localises to the cytoplasm. Functionally, peptide chain release factor 1 directs the termination of translation in response to the peptide chain termination codons UAG and UAA. In Polynucleobacter necessarius subsp. necessarius (strain STIR1), this protein is Peptide chain release factor 1.